Reading from the N-terminus, the 472-residue chain is Siroheme synthase (472 aa).

Residues 1–204 (MDYLPIFTKL…GQTEKAIALM (204 aa)) are precorrin-2 dehydrogenase /sirohydrochlorin ferrochelatase. Residues 22-23 (SI) and 43-44 (LE) each bind NAD(+). S128 is subject to Phosphoserine. A uroporphyrinogen-III C-methyltransferase region spans residues 215-472 (GDVALVGAGP…SRDPFLVNLA (258 aa)). P224 serves as a coordination point for S-adenosyl-L-methionine. The Proton acceptor role is filled by D247. Residue K269 is the Proton donor of the active site. S-adenosyl-L-methionine is bound by residues 300–302 (GGD), I305, 330–331 (TA), M382, and G411.

This sequence in the N-terminal section; belongs to the precorrin-2 dehydrogenase / sirohydrochlorin ferrochelatase family. The protein in the C-terminal section; belongs to the precorrin methyltransferase family.

The catalysed reaction is uroporphyrinogen III + 2 S-adenosyl-L-methionine = precorrin-2 + 2 S-adenosyl-L-homocysteine + H(+). It carries out the reaction precorrin-2 + NAD(+) = sirohydrochlorin + NADH + 2 H(+). The enzyme catalyses siroheme + 2 H(+) = sirohydrochlorin + Fe(2+). Its pathway is cofactor biosynthesis; adenosylcobalamin biosynthesis; precorrin-2 from uroporphyrinogen III: step 1/1. It participates in cofactor biosynthesis; adenosylcobalamin biosynthesis; sirohydrochlorin from precorrin-2: step 1/1. It functions in the pathway porphyrin-containing compound metabolism; siroheme biosynthesis; precorrin-2 from uroporphyrinogen III: step 1/1. The protein operates within porphyrin-containing compound metabolism; siroheme biosynthesis; siroheme from sirohydrochlorin: step 1/1. Its pathway is porphyrin-containing compound metabolism; siroheme biosynthesis; sirohydrochlorin from precorrin-2: step 1/1. Functionally, multifunctional enzyme that catalyzes the SAM-dependent methylations of uroporphyrinogen III at position C-2 and C-7 to form precorrin-2 via precorrin-1. Then it catalyzes the NAD-dependent ring dehydrogenation of precorrin-2 to yield sirohydrochlorin. Finally, it catalyzes the ferrochelation of sirohydrochlorin to yield siroheme. The polypeptide is Siroheme synthase (Psychromonas ingrahamii (strain DSM 17664 / CCUG 51855 / 37)).